The following is a 115-amino-acid chain: Putative membrane protein insertion efficiency factor (115 aa).

Belongs to the UPF0161 family.

It localises to the cell membrane. Could be involved in insertion of integral membrane proteins into the membrane. The protein is Putative membrane protein insertion efficiency factor of Mycolicibacterium paratuberculosis (strain ATCC BAA-968 / K-10) (Mycobacterium paratuberculosis).